The primary structure comprises 294 residues: Nucleotide-binding protein Reut_A0350 (294 aa).

8–15 contributes to the ATP binding site; it reads GISGSGKS. 57–60 contacts GTP; that stretch reads DIRS.

This sequence belongs to the RapZ-like family.

Functionally, displays ATPase and GTPase activities. This is Nucleotide-binding protein Reut_A0350 from Cupriavidus pinatubonensis (strain JMP 134 / LMG 1197) (Cupriavidus necator (strain JMP 134)).